A 498-amino-acid chain; its full sequence is ATP synthase subunit beta, chloroplastic (498 aa).

172 to 179 (GGAGVGKT) is an ATP binding site.

The protein belongs to the ATPase alpha/beta chains family. In terms of assembly, F-type ATPases have 2 components, CF(1) - the catalytic core - and CF(0) - the membrane proton channel. CF(1) has five subunits: alpha(3), beta(3), gamma(1), delta(1), epsilon(1). CF(0) has four main subunits: a(1), b(1), b'(1) and c(9-12).

Its subcellular location is the plastid. The protein resides in the chloroplast thylakoid membrane. The enzyme catalyses ATP + H2O + 4 H(+)(in) = ADP + phosphate + 5 H(+)(out). In terms of biological role, produces ATP from ADP in the presence of a proton gradient across the membrane. The catalytic sites are hosted primarily by the beta subunits. The chain is ATP synthase subunit beta, chloroplastic from Calycanthus floridus var. glaucus (Eastern sweetshrub).